The sequence spans 168 residues: Phosphopantetheine adenylyltransferase (168 aa).

Thr-10 contacts substrate. ATP is bound by residues 10 to 11 (TF) and His-18. Lys-42, Leu-75, and Arg-89 together coordinate substrate. Residues 90–92 (GVR), Glu-100, and 125–131 (YTYVASS) each bind ATP.

Belongs to the bacterial CoaD family. In terms of assembly, homohexamer. The cofactor is Mg(2+).

It is found in the cytoplasm. The enzyme catalyses (R)-4'-phosphopantetheine + ATP + H(+) = 3'-dephospho-CoA + diphosphate. It functions in the pathway cofactor biosynthesis; coenzyme A biosynthesis; CoA from (R)-pantothenate: step 4/5. Its function is as follows. Reversibly transfers an adenylyl group from ATP to 4'-phosphopantetheine, yielding dephospho-CoA (dPCoA) and pyrophosphate. This Prosthecochloris aestuarii (strain DSM 271 / SK 413) protein is Phosphopantetheine adenylyltransferase.